The chain runs to 1333 residues: snRNA-activating protein complex subunit 4 (1333 aa).

The tract at residues His29 to Glu84 is disordered. Acidic residues-rich tracts occupy residues Ser41–Glu52 and Leu59–Asp73. Ser68 bears the Phosphoserine mark. The SNAPC5-binding stretch occupies residues Glu84–Gly133. Residues Glu250 to Glu288 enclose the Myb-like 1 domain. Positions His289 to Thr343 constitute an HTH myb-type 1 domain. Positions Trp317–Asn341 form a DNA-binding region, H-T-H motif. The region spanning Leu344–Leu395 is the Myb-like 2 domain. HTH myb-type domains lie at Asp396 to Leu451 and Lys452 to Gln503. DNA-binding regions (H-T-H motif) lie at residues Trp424–Leu447 and Trp476–Ala499. Basic residues predominate over residues Gln503 to His515. 4 disordered regions span residues Gln503–Ser558, Leu662–Gln702, Asn811–Cys842, and Leu1079–Ala1117. Over residues Ser516–Asn546 the composition is skewed to low complexity. Composition is skewed to polar residues over residues Leu672–Ala686 and Asn811–Gln826. The interval Ala1131–Asp1247 is SNAPC2-binding. Phosphoserine is present on residues Ser1252, Ser1254, Ser1301, and Ser1309. The segment at Pro1282–Arg1333 is disordered. The span at Arg1324–Arg1333 shows a compositional bias: basic residues.

Part of the SNAPc composed of 5 subunits: SNAPC1, SNAPC2, SNAPC3, SNAPC4 and SNAPC5. SNAPC4 interacts with SNAPC1, SNAPC2, SNAPC5, BRF2 and TBP.

The protein resides in the nucleus. In terms of biological role, part of the SNAPc complex required for the transcription of both RNA polymerase II and III small-nuclear RNA genes. Binds to the proximal sequence element (PSE), a non-TATA-box basal promoter element common to these 2 types of genes. Recruits TBP and BRF2 to the U6 snRNA TATA box. This is snRNA-activating protein complex subunit 4 from Mus musculus (Mouse).